The following is a 503-amino-acid chain: Annexin A11 (503 aa).

Composition is skewed to pro residues over residues 1 to 17 (MSYP…PPAP), 80 to 145 (GYPP…PYPG), and 155 to 169 (SPVP…PSYP). Disordered regions lie at residues 1–35 (MSYP…MPPI) and 56–178 (AANM…GTVT). Annexin repeat units lie at residues 198–269 (FDPL…ALMK), 270–341 (TPIL…SLSQ), 353–425 (SLVQ…AVVK), and 429–500 (NTPA…KICG). N6-acetyllysine is present on residues Lys-246 and Lys-253. Lys-477 bears the N6-acetyllysine mark.

Belongs to the annexin family. Interacts with PDCD6 in a calcium-dependent manner. Interacts with KIF23 during cytokinesis. Interacts with S100A6.

Its subcellular location is the cytoplasm. The protein resides in the melanosome. The protein localises to the nucleus envelope. It is found in the nucleus. It localises to the nucleoplasm. Its subcellular location is the cytoskeleton. The protein resides in the spindle. Its function is as follows. Required for midbody formation and completion of the terminal phase of cytokinesis. Binds specifically to calcyclin in a calcium-dependent manner. This Oryctolagus cuniculus (Rabbit) protein is Annexin A11 (ANXA11).